A 343-amino-acid chain; its full sequence is Uroporphyrinogen decarboxylase (343 aa).

Residues 23-27 (RQAGR), Asp-73, Tyr-151, Ser-206, and His-322 contribute to the substrate site.

This sequence belongs to the uroporphyrinogen decarboxylase family. As to quaternary structure, homodimer.

It is found in the cytoplasm. It carries out the reaction uroporphyrinogen III + 4 H(+) = coproporphyrinogen III + 4 CO2. It participates in porphyrin-containing compound metabolism; protoporphyrin-IX biosynthesis; coproporphyrinogen-III from 5-aminolevulinate: step 4/4. Functionally, catalyzes the decarboxylation of four acetate groups of uroporphyrinogen-III to yield coproporphyrinogen-III. The protein is Uroporphyrinogen decarboxylase of Granulibacter bethesdensis (strain ATCC BAA-1260 / CGDNIH1).